The sequence spans 539 residues: uncharacterized protein (539 aa).

2 disordered regions span residues 179–203 (SDEL…HSHG) and 433–459 (AQAS…HRDE). Residues 182–192 (LLPDTGEDSDE) show a composition bias toward acidic residues. Over residues 433–442 (AQASARAQAR) the composition is skewed to low complexity. Residues 443–455 (AARRGRSAAKARG) show a composition bias toward basic residues.

It belongs to the mycobacterial PPE family.

It is found in the secreted. This is an uncharacterized protein from Mycobacterium tuberculosis (strain CDC 1551 / Oshkosh).